The following is a 152-amino-acid chain: Protein Smg homolog (152 aa).

It belongs to the Smg family.

The chain is Protein Smg homolog from Nitrosomonas eutropha (strain DSM 101675 / C91 / Nm57).